We begin with the raw amino-acid sequence, 77 residues long: Acyl carrier protein (77 aa).

The Carrier domain occupies 4 to 77; sequence SETFEKVKKI…TVQAAVDXIN (74 aa). Ser40 bears the O-(pantetheine 4'-phosphoryl)serine mark.

It belongs to the acyl carrier protein (ACP) family. In terms of processing, 4'-phosphopantetheine is transferred from CoA to a specific serine of apo-ACP by AcpS. This modification is essential for activity because fatty acids are bound in thioester linkage to the sulfhydryl of the prosthetic group.

Its subcellular location is the cytoplasm. The protein operates within lipid metabolism; fatty acid biosynthesis. In terms of biological role, carrier of the growing fatty acid chain in fatty acid biosynthesis. The chain is Acyl carrier protein from Anabaena variabilis.